Reading from the N-terminus, the 353-residue chain is Photosystem II protein D1 (353 aa).

The residue at position 2 (threonine 2) is an N-acetylthreonine. Threonine 2 carries the phosphothreonine modification. 3 consecutive transmembrane segments (helical) span residues 29–46 (YIGW…TATS), 118–133 (HFFI…EWEL), and 142–156 (WIAV…AATA). A chlorophyll a-binding site is contributed by histidine 118. Tyrosine 126 is a pheophytin a binding site. The [CaMn4O5] cluster site is built by aspartate 170 and glutamate 189. A helical membrane pass occupies residues 197 to 218 (FHMLGVAGVFGGSLFSAMHGSL). Histidine 198 contributes to the chlorophyll a binding site. A quinone is bound by residues histidine 215 and 264 to 265 (SF). Residue histidine 215 coordinates Fe cation. Histidine 272 is a Fe cation binding site. Residues 274-288 (FLAIWPVVGIWFTAL) form a helical membrane-spanning segment. The [CaMn4O5] cluster site is built by histidine 332, glutamate 333, aspartate 342, and alanine 344. Positions 345-353 (SVEAPSING) are excised as a propeptide.

It belongs to the reaction center PufL/M/PsbA/D family. As to quaternary structure, PSII is composed of 1 copy each of membrane proteins PsbA, PsbB, PsbC, PsbD, PsbE, PsbF, PsbH, PsbI, PsbJ, PsbK, PsbL, PsbM, PsbT, PsbX, PsbY, PsbZ, Psb30/Ycf12, at least 3 peripheral proteins of the oxygen-evolving complex and a large number of cofactors. It forms dimeric complexes. The D1/D2 heterodimer binds P680, chlorophylls that are the primary electron donor of PSII, and subsequent electron acceptors. It shares a non-heme iron and each subunit binds pheophytin, quinone, additional chlorophylls, carotenoids and lipids. D1 provides most of the ligands for the Mn4-Ca-O5 cluster of the oxygen-evolving complex (OEC). There is also a Cl(-1) ion associated with D1 and D2, which is required for oxygen evolution. The PSII complex binds additional chlorophylls, carotenoids and specific lipids. is required as a cofactor. Tyr-161 forms a radical intermediate that is referred to as redox-active TyrZ, YZ or Y-Z. In terms of processing, C-terminally processed by CTPA; processing is essential to allow assembly of the oxygen-evolving complex and thus photosynthetic growth.

Its subcellular location is the plastid. The protein resides in the chloroplast thylakoid membrane. It catalyses the reaction 2 a plastoquinone + 4 hnu + 2 H2O = 2 a plastoquinol + O2. Photosystem II (PSII) is a light-driven water:plastoquinone oxidoreductase that uses light energy to abstract electrons from H(2)O, generating O(2) and a proton gradient subsequently used for ATP formation. It consists of a core antenna complex that captures photons, and an electron transfer chain that converts photonic excitation into a charge separation. The D1/D2 (PsbA/PsbD) reaction center heterodimer binds P680, the primary electron donor of PSII as well as several subsequent electron acceptors. The chain is Photosystem II protein D1 from Stigeoclonium helveticum (Green alga).